Here is a 386-residue protein sequence, read N- to C-terminus: Succinate--CoA ligase [ADP-forming] subunit beta (386 aa).

The ATP-grasp domain occupies 9-244; it reads KEILRKYGVP…HDEEDPLETR (236 aa). ATP-binding positions include lysine 46, 53 to 55, glutamate 99, cysteine 102, and glutamate 107; that span reads GRG. Mg(2+) is bound by residues asparagine 199 and aspartate 213. Residues asparagine 264 and 321–323 contribute to the substrate site; that span reads GIM.

The protein belongs to the succinate/malate CoA ligase beta subunit family. As to quaternary structure, heterotetramer of two alpha and two beta subunits. Requires Mg(2+) as cofactor.

The enzyme catalyses succinate + ATP + CoA = succinyl-CoA + ADP + phosphate. The catalysed reaction is GTP + succinate + CoA = succinyl-CoA + GDP + phosphate. The protein operates within carbohydrate metabolism; tricarboxylic acid cycle; succinate from succinyl-CoA (ligase route): step 1/1. Its function is as follows. Succinyl-CoA synthetase functions in the citric acid cycle (TCA), coupling the hydrolysis of succinyl-CoA to the synthesis of either ATP or GTP and thus represents the only step of substrate-level phosphorylation in the TCA. The beta subunit provides nucleotide specificity of the enzyme and binds the substrate succinate, while the binding sites for coenzyme A and phosphate are found in the alpha subunit. In Rickettsia massiliae (strain Mtu5), this protein is Succinate--CoA ligase [ADP-forming] subunit beta.